The following is a 303-amino-acid chain: Suppressor of silencing P0 (303 aa).

This sequence belongs to the polerovirus P0 protein family.

In terms of biological role, suppressor of RNA-mediated gene silencing. This is Suppressor of silencing P0 from Pea enation mosaic virus-1 (strain WSG) (PEMV-1).